Consider the following 363-residue polypeptide: Peroxisomal (S)-2-hydroxyacid oxidase GLO3 (363 aa).

The 357-residue stretch at 1–357 (MDQIVNVDEF…TRNHVRTENE (357 aa)) folds into the FMN hydroxy acid dehydrogenase domain. FMN-binding positions include 78–80 (PTG), Ser-107, 128–130 (QIY), and Thr-156. Tyr-130 lines the a 2-oxocarboxylate pocket. Residue Arg-165 coordinates a 2-oxocarboxylate. 2 residues coordinate FMN: Lys-228 and Ser-250. His-252 (proton acceptor) is an active-site residue. A 2-oxocarboxylate is bound at residue Arg-255. FMN-binding positions include 283–287 (DGGVR) and 306–307 (GR). The Microbody targeting signal motif lies at 361-363 (SML).

Belongs to the FMN-dependent alpha-hydroxy acid dehydrogenase family. In terms of assembly, homotetramer. It depends on FMN as a cofactor.

It localises to the peroxisome. The enzyme catalyses a (2S)-2-hydroxycarboxylate + O2 = a 2-oxocarboxylate + H2O2. The catalysed reaction is 2-hydroxy-4-methylpentanoate + O2 = 4-methyl-2-oxopentanoate + H2O2. It carries out the reaction 2-hydroxyhexanoate + O2 = 2-oxohexanoate + H2O2. It catalyses the reaction 2-hydroxyoctanoate + O2 = 2-oxooctanoate + H2O2. Oxidase that catalyzes the oxidation of a broad range of 2-hydroxyacids to the corresponding 2-oxoacids, with a reduction of O2 to H2O2. Displays the highest activity with leucic acid (2-hydroxy-4-methylpentanoate) and has intermediate activity with 2-hydroxyhexanoate and 2-hydroxyoctanote. Shows lower activity with 2-hydroxydodecanoate, valic acid, and isoleucic acid and extremely low activity with glycolate and L-lactate. Cannot use 2-hydroxyhexadecanoate or D-lactate as substrates. May be involved in the conversion or degradation of 2-hydroxyacids produced during the metabolism of fatty acids or amino acids. The polypeptide is Peroxisomal (S)-2-hydroxyacid oxidase GLO3 (GLO3) (Arabidopsis thaliana (Mouse-ear cress)).